A 456-amino-acid polypeptide reads, in one-letter code: MELTSLTAISPVDGRYSNLTILLRNIFSEFGFLKYRLNIEVQWLKKIISMSQILDINNIEYKEILFLDSIVEEFNEKDAILIKNIEKETNHDIKALEYFLKNKIAQSKNLLTISEFVHFGCTSEDINNIAYSLMIKDARDKIILPLWYKIISTLKKMVFKYQHYPLLSLTHGQPATPSTMGKEIANFYYRMKRQYIILKKIEILGKINGSTGNYNAHLAAYPDINWHKISKDFITSFGINWNPYTTQIEPHDYIAEFFSCMSLFNTILINFNRDMWGYISLNYFKQRTIDYEIGSSIMPHKVNPIDFENSEGNLGLSNALMNHMITKLPISRWQRDLSDSTVLRNIGVAISYAIIAYNSVLSGINKLEINESELLKNLDKNWSILSEPIQTIMRRYGIKNAYEKLKKLTRGKEINRNVIHTFISSLNIPEEEKKRLKNMTPFNYIGAASQIINEIE.

N(6)-(1,2-dicarboxyethyl)-AMP contacts are provided by residues 15–16 (RY), 90–92 (NHD), and 122–123 (TS). The Proton donor/acceptor role is filled by His-171. Residue Gln-247 coordinates N(6)-(1,2-dicarboxyethyl)-AMP. Residue Ser-295 is the Proton donor/acceptor of the active site. N(6)-(1,2-dicarboxyethyl)-AMP is bound by residues Ser-296, 301–303 (KVN), Asn-309, Arg-335, and 340–344 (STVLR).

Belongs to the lyase 1 family. Adenylosuccinate lyase subfamily. Homotetramer. Residues from neighboring subunits contribute catalytic and substrate-binding residues to each active site.

It catalyses the reaction N(6)-(1,2-dicarboxyethyl)-AMP = fumarate + AMP. The enzyme catalyses (2S)-2-[5-amino-1-(5-phospho-beta-D-ribosyl)imidazole-4-carboxamido]succinate = 5-amino-1-(5-phospho-beta-D-ribosyl)imidazole-4-carboxamide + fumarate. It participates in purine metabolism; AMP biosynthesis via de novo pathway; AMP from IMP: step 2/2. The protein operates within purine metabolism; IMP biosynthesis via de novo pathway; 5-amino-1-(5-phospho-D-ribosyl)imidazole-4-carboxamide from 5-amino-1-(5-phospho-D-ribosyl)imidazole-4-carboxylate: step 2/2. In terms of biological role, catalyzes two reactions in de novo purine nucleotide biosynthesis. Catalyzes the breakdown of 5-aminoimidazole- (N-succinylocarboxamide) ribotide (SAICAR or 2-[5-amino-1-(5-phospho-beta-D-ribosyl)imidazole-4-carboxamido]succinate) to 5-aminoimidazole-4-carboxamide ribotide (AICAR or 5-amino-1-(5-phospho-beta-D-ribosyl)imidazole-4-carboxamide) and fumarate, and of adenylosuccinate (ADS or N(6)-(1,2-dicarboxyethyl)-AMP) to adenosine monophosphate (AMP) and fumarate. The chain is Adenylosuccinate lyase (purB) from Buchnera aphidicola subsp. Acyrthosiphon pisum (strain APS) (Acyrthosiphon pisum symbiotic bacterium).